The following is a 78-amino-acid chain: Acyl carrier protein BQ2027_MB0103 (78 aa).

The Carrier domain occupies 1-78 (MRDRILAAVC…ELEAVCTEFG (78 aa)). Serine 35 is subject to O-(pantetheine 4'-phosphoryl)serine.

It belongs to the acyl carrier protein (ACP) family. The cofactor is pantetheine 4'-phosphate.

The protein operates within lipid metabolism; fatty acid metabolism. In terms of biological role, acyl-carrier protein (ACP) involved in the biosynthesis of a unique class of isonitrile lipopeptides (INLPs) that seem to play a role in metal acquisition. Is the dedicated ACP for the loading of activated acyl groups catalyzed by FadD10. This is Acyl carrier protein BQ2027_MB0103 from Mycobacterium bovis (strain ATCC BAA-935 / AF2122/97).